Reading from the N-terminus, the 375-residue chain is Nucleolysin TIAR (375 aa).

RRM domains follow at residues 9-85 (RTLY…WATT) and 97-175 (FHVF…WATR). Lys122 carries the post-translational modification N6-acetyllysine. A Phosphoserine modification is found at Ser201. In terms of domain architecture, RRM 3 spans 205-277 (CTVYCGGIAS…HVVKCYWGKE (73 aa)). Residues 345-375 (FGAQPPQGQAPPPVIPPPNQAGYGMASYQTQ) form a disordered region. The span at 352–363 (GQAPPPVIPPPN) shows a compositional bias: pro residues.

As to quaternary structure, interacts with FASTK. Phosphorylated by MAPK14 following DNA damage, releasing TIAR from GADD45A mRNA. As to expression, expressed in brain, heart, kidney, lung and skeletal muscle.

Its subcellular location is the nucleus. It localises to the cytoplasm. The protein localises to the cytolytic granule. The protein resides in the stress granule. Functionally, RNA-binding protein involved in alternative pre-RNA splicing and in cytoplasmic stress granules formation. Shows a preference for uridine-rich RNAs. Activates splicing of alternative exons with weak 5' splice sites followed by a U-rich stretch on its own pre-mRNA and on TIA1 mRNA. Promotes the inclusion of TIA1 exon 5 to give rise to the long isoform (isoform a) of TIA1. Acts downstream of the stress-induced phosphorylation of EIF2S1/EIF2A to promote the recruitment of untranslated mRNAs to cytoplasmic stress granules (SG). Possesses nucleolytic activity against cytotoxic lymphocyte target cells. May be involved in apoptosis. The sequence is that of Nucleolysin TIAR (TIAL1) from Homo sapiens (Human).